The following is a 311-amino-acid chain: Methionyl-tRNA formyltransferase (311 aa).

Residue 110–113 (SLLP) participates in (6S)-5,6,7,8-tetrahydrofolate binding.

Belongs to the Fmt family.

The catalysed reaction is L-methionyl-tRNA(fMet) + (6R)-10-formyltetrahydrofolate = N-formyl-L-methionyl-tRNA(fMet) + (6S)-5,6,7,8-tetrahydrofolate + H(+). In terms of biological role, attaches a formyl group to the free amino group of methionyl-tRNA(fMet). The formyl group appears to play a dual role in the initiator identity of N-formylmethionyl-tRNA by promoting its recognition by IF2 and preventing the misappropriation of this tRNA by the elongation apparatus. The sequence is that of Methionyl-tRNA formyltransferase from Streptococcus agalactiae serotype Ia (strain ATCC 27591 / A909 / CDC SS700).